A 92-amino-acid polypeptide reads, in one-letter code: Protein S100-A6 (92 aa).

2 consecutive EF-hand domains span residues 12-47 and 48-83; these read LVAIFHKYSSREGDKNTLSKGELKELIQKELTIGAE and LEDSEIAKLLDDLDQNKDQVVNFQEYVTFLGALAMI. The Ca(2+) site is built by Thr28 and Glu33. Lys40 is modified (N6-acetyllysine). Residues Asp61, Asn63, Asp65, and Glu72 each contribute to the Ca(2+) site.

This sequence belongs to the S-100 family. As to quaternary structure, homodimer; head to tail assembly of 2 subunits. Interacts with CACYBP in a calcium-dependent manner. Interacts with ANXA2 and ANXA11 (via N-terminus). Interacts with SUGT1. Interacts with TP53; has higher affinity for TP53 that is phosphorylated on its N-terminal domain, and lower affinity for TP53 that is phosphorylated on its C-terminal domain. Interacts with tropomyosin. Interacts with FKBP4. Interacts with PPP5C (via TPR repeats); the interaction is calcium-dependent and modulates PPP5C activity. Interacts with TPPP; this interaction inhibits TPPP dimerization.

Its subcellular location is the nucleus envelope. The protein localises to the cytoplasm. The protein resides in the cell membrane. In terms of biological role, may function as calcium sensor and modulator, contributing to cellular calcium signaling. May function by interacting with other proteins, such as TPR-containing proteins, and indirectly play a role in many physiological processes such as the reorganization of the actin cytoskeleton and in cell motility. Binds 2 calcium ions. Calcium binding is cooperative. This Equus caballus (Horse) protein is Protein S100-A6 (S100A6).